Here is a 207-residue protein sequence, read N- to C-terminus: Probable nicotinate-nucleotide adenylyltransferase (207 aa).

It belongs to the NadD family.

It carries out the reaction nicotinate beta-D-ribonucleotide + ATP + H(+) = deamido-NAD(+) + diphosphate. It functions in the pathway cofactor biosynthesis; NAD(+) biosynthesis; deamido-NAD(+) from nicotinate D-ribonucleotide: step 1/1. Functionally, catalyzes the reversible adenylation of nicotinate mononucleotide (NaMN) to nicotinic acid adenine dinucleotide (NaAD). The sequence is that of Probable nicotinate-nucleotide adenylyltransferase from Desulfitobacterium hafniense (strain Y51).